Here is a 131-residue protein sequence, read N- to C-terminus: Peptide methionine sulfoxide reductase MsrB (131 aa).

The MsrB domain maps to 8-130 (DAEWRAQLTD…NSVCLDLKRS (123 aa)). Positions 47, 50, 96, and 99 each coordinate Zn(2+). Residue Cys-119 is the Nucleophile of the active site.

Belongs to the MsrB Met sulfoxide reductase family. The cofactor is Zn(2+).

It catalyses the reaction L-methionyl-[protein] + [thioredoxin]-disulfide + H2O = L-methionyl-(R)-S-oxide-[protein] + [thioredoxin]-dithiol. This Alkalilimnicola ehrlichii (strain ATCC BAA-1101 / DSM 17681 / MLHE-1) protein is Peptide methionine sulfoxide reductase MsrB.